The chain runs to 603 residues: Flavin-dependent halogenase chlA (603 aa).

FAD contacts are provided by G16, A19, and E59. Positions 352 and 353 each coordinate chloride.

Belongs to the flavin-dependent halogenase family.

The catalysed reaction is 2,4,6-trihydroxyphenylhexan-1-one + FADH2 + chloride + O2 = (3-chloro-2,4,6-trihydroxyphenyl)hexan-1-one + FAD + 2 H2O + H(+). It carries out the reaction (3-chloro-2,4,6-trihydroxyphenyl)hexan-1-one + FADH2 + chloride + O2 = (3,5-dichloro-2,4,6-trihydroxyphenyl)hexan-1-one + FAD + 2 H2O. Its function is as follows. Flavin-dependent halogenase; part of the gene cluster that mediates the biosynthesis of DIF-1 (Differentiation Inducing Factor-1), a signal molecule involved in the differentiation of pstO (prestalk-O) cells. The three-step process begins with the formation of (2,4,6-trihydroxyphenyl)-1-hexan-1-one (THPH) by the polyketide synthase StlB. THPH is then dichlorinated by the flavin-dependent halogenase ChlA. The last step of DIF-1 biosynthesis is the O-methylation of dichloro-THPH (or des-methyl-DIF-1) by the methyltransferase DmtA to yield DIF-1. In Dictyostelium discoideum (Social amoeba), this protein is Flavin-dependent halogenase chlA.